A 298-amino-acid polypeptide reads, in one-letter code: Acetylglutamate kinase (298 aa).

Substrate-binding positions include 69-70 (GG), R91, and N196.

It belongs to the acetylglutamate kinase family. ArgB subfamily.

It is found in the cytoplasm. The enzyme catalyses N-acetyl-L-glutamate + ATP = N-acetyl-L-glutamyl 5-phosphate + ADP. Its pathway is amino-acid biosynthesis; L-arginine biosynthesis; N(2)-acetyl-L-ornithine from L-glutamate: step 2/4. Functionally, catalyzes the ATP-dependent phosphorylation of N-acetyl-L-glutamate. The polypeptide is Acetylglutamate kinase (Rhodopseudomonas palustris (strain BisB18)).